Consider the following 331-residue polypeptide: Ketol-acid reductoisomerase (NADP(+)) (331 aa).

In terms of domain architecture, KARI N-terminal Rossmann spans 2-182 (ARMYYDEDAN…GGTRAGVLET (181 aa)). Residues 25–28 (YGSQ), S51, S53, and 83–86 (DEVQ) contribute to the NADP(+) site. The active site involves H108. G134 serves as a coordination point for NADP(+). The KARI C-terminal knotted domain maps to 183-328 (TFREETETDL…KDLRAMFSWL (146 aa)). Positions 191, 195, 227, and 231 each coordinate Mg(2+). S252 lines the substrate pocket.

The protein belongs to the ketol-acid reductoisomerase family. Requires Mg(2+) as cofactor.

The catalysed reaction is (2R)-2,3-dihydroxy-3-methylbutanoate + NADP(+) = (2S)-2-acetolactate + NADPH + H(+). It carries out the reaction (2R,3R)-2,3-dihydroxy-3-methylpentanoate + NADP(+) = (S)-2-ethyl-2-hydroxy-3-oxobutanoate + NADPH + H(+). It functions in the pathway amino-acid biosynthesis; L-isoleucine biosynthesis; L-isoleucine from 2-oxobutanoate: step 2/4. The protein operates within amino-acid biosynthesis; L-valine biosynthesis; L-valine from pyruvate: step 2/4. Functionally, involved in the biosynthesis of branched-chain amino acids (BCAA). Catalyzes an alkyl-migration followed by a ketol-acid reduction of (S)-2-acetolactate (S2AL) to yield (R)-2,3-dihydroxy-isovalerate. In the isomerase reaction, S2AL is rearranged via a Mg-dependent methyl migration to produce 3-hydroxy-3-methyl-2-ketobutyrate (HMKB). In the reductase reaction, this 2-ketoacid undergoes a metal-dependent reduction by NADPH to yield (R)-2,3-dihydroxy-isovalerate. This is Ketol-acid reductoisomerase (NADP(+)) from Nostoc punctiforme (strain ATCC 29133 / PCC 73102).